Here is a 417-residue protein sequence, read N- to C-terminus: Histidinol-phosphate aminotransferase 1, chloroplastic (417 aa).

Residues 1 to 40 (MGVINVQGSPSFSIHSSESNLRKSRALKKPFCSIRNRVYC) constitute a chloroplast transit peptide. The residue at position 41 (Ala41) is an N-acetylalanine. Lys277 is subject to N6-(pyridoxal phosphate)lysine.

It belongs to the class-II pyridoxal-phosphate-dependent aminotransferase family. Histidinol-phosphate aminotransferase subfamily. In terms of assembly, homodimer. It depends on pyridoxal 5'-phosphate as a cofactor. As to expression, expressed in both vegetative and reproductive tissues.

It is found in the plastid. It localises to the chloroplast. The enzyme catalyses L-histidinol phosphate + 2-oxoglutarate = 3-(imidazol-4-yl)-2-oxopropyl phosphate + L-glutamate. It functions in the pathway amino-acid biosynthesis; L-histidine biosynthesis; L-histidine from 5-phospho-alpha-D-ribose 1-diphosphate: step 7/9. The chain is Histidinol-phosphate aminotransferase 1, chloroplastic (HISN6A) from Arabidopsis thaliana (Mouse-ear cress).